The sequence spans 362 residues: 3-isopropylmalate dehydrogenase (362 aa).

G77 to E88 contributes to the NAD(+) binding site. Substrate-binding residues include R95, R105, R134, and D223. Mg(2+)-binding residues include D223, D248, and D252. Residue G287–N298 coordinates NAD(+).

The protein belongs to the isocitrate and isopropylmalate dehydrogenases family. As to quaternary structure, homodimer. Requires Mg(2+) as cofactor. Mn(2+) is required as a cofactor.

The protein localises to the cytoplasm. The enzyme catalyses (2R,3S)-3-isopropylmalate + NAD(+) = 4-methyl-2-oxopentanoate + CO2 + NADH. The protein operates within amino-acid biosynthesis; L-leucine biosynthesis; L-leucine from 3-methyl-2-oxobutanoate: step 3/4. Catalyzes the oxidation of 3-carboxy-2-hydroxy-4-methylpentanoate (3-isopropylmalate) to 3-carboxy-4-methyl-2-oxopentanoate. The product decarboxylates to 4-methyl-2 oxopentanoate. This chain is 3-isopropylmalate dehydrogenase (LEU2), found in Kluyveromyces lactis (strain ATCC 8585 / CBS 2359 / DSM 70799 / NBRC 1267 / NRRL Y-1140 / WM37) (Yeast).